The primary structure comprises 715 residues: Photosystem I P700 chlorophyll a apoprotein A1 (715 aa).

Helical transmembrane passes span 60–83 (VFSA…FHGA), 146–169 (LYST…FHYH), 185–209 (LNHH…HVSL), 281–299 (TVHH…GHMY), 336–359 (WHAQ…HHMY), 375–401 (LSLF…IFMV), 423–445 (AIIS…LYIH), and 521–539 (FLVH…LILL). [4Fe-4S] cluster-binding residues include C563 and C572. Helical transmembrane passes span 579–600 (HVFL…HFSW) and 654–676 (LSAY…MFLF). H665 contacts chlorophyll a'. Chlorophyll a contacts are provided by M673 and Y681. W682 contributes to the phylloquinone binding site. The helical transmembrane segment at 714 to 715 (AE) threads the bilayer.

This sequence belongs to the PsaA/PsaB family. In terms of assembly, the PsaA/B heterodimer binds the P700 chlorophyll special pair and subsequent electron acceptors. PSI consists of a core antenna complex that captures photons, and an electron transfer chain that converts photonic excitation into a charge separation. The eukaryotic PSI reaction center is composed of at least 11 subunits. Requires P700 is a chlorophyll a/chlorophyll a' dimer, A0 is one or more chlorophyll a, A1 is one or both phylloquinones and FX is a shared 4Fe-4S iron-sulfur center. as cofactor.

It localises to the plastid. It is found in the chloroplast thylakoid membrane. The catalysed reaction is reduced [plastocyanin] + hnu + oxidized [2Fe-2S]-[ferredoxin] = oxidized [plastocyanin] + reduced [2Fe-2S]-[ferredoxin]. In terms of biological role, psaA and PsaB bind P700, the primary electron donor of photosystem I (PSI), as well as the electron acceptors A0, A1 and FX. PSI is a plastocyanin-ferredoxin oxidoreductase, converting photonic excitation into a charge separation, which transfers an electron from the donor P700 chlorophyll pair to the spectroscopically characterized acceptors A0, A1, FX, FA and FB in turn. Oxidized P700 is reduced on the lumenal side of the thylakoid membrane by plastocyanin. The protein is Photosystem I P700 chlorophyll a apoprotein A1 of Phlegmariurus squarrosus (Rock tassel fern).